Consider the following 630-residue polypeptide: 1-deoxy-D-xylulose-5-phosphate synthase (630 aa).

Thiamine diphosphate-binding positions include His72 and Gly113 to Ser115. Asp144 is a binding site for Mg(2+). Residues Gly145 to Ala146, Asn173, Tyr284, and Glu367 contribute to the thiamine diphosphate site. A Mg(2+)-binding site is contributed by Asn173.

This sequence belongs to the transketolase family. DXPS subfamily. Homodimer. Requires Mg(2+) as cofactor. Thiamine diphosphate is required as a cofactor.

It carries out the reaction D-glyceraldehyde 3-phosphate + pyruvate + H(+) = 1-deoxy-D-xylulose 5-phosphate + CO2. It functions in the pathway metabolic intermediate biosynthesis; 1-deoxy-D-xylulose 5-phosphate biosynthesis; 1-deoxy-D-xylulose 5-phosphate from D-glyceraldehyde 3-phosphate and pyruvate: step 1/1. In terms of biological role, catalyzes the acyloin condensation reaction between C atoms 2 and 3 of pyruvate and glyceraldehyde 3-phosphate to yield 1-deoxy-D-xylulose-5-phosphate (DXP). The sequence is that of 1-deoxy-D-xylulose-5-phosphate synthase from Bacillus cereus (strain G9842).